The following is a 571-amino-acid chain: Decapping 5-like protein (571 aa).

A compositionally biased stretch (low complexity) spans 1-17 (MASESSQSSSPSSSQPP). 4 disordered regions span residues 1–27 (MASESSQSSSPSSSQPPSSVPSPSPGN), 102–141 (LQVNPSPSAQSRQEIQSEQDVNQSPHSRPAMTMSSPISGY), 159–187 (LSSKPVPVTQHSSVPLSFQPPSANAGSLT), and 258–305 (SQVV…SEAQ). In terms of domain architecture, Sm spans 25–108 (PGNNVGDTFI…IKDLQVNPSP (84 aa)). Polar residues-rich tracts occupy residues 104 to 138 (VNPSPSAQSRQEIQSEQDVNQSPHSRPAMTMSSPI) and 167 to 187 (TQHSSVPLSFQPPSANAGSLT). A compositionally biased stretch (low complexity) spans 264–279 (SPDVSSNQSYSSNPSP). The segment covering 293 to 305 (SVSSNLSPPSEAQ) has biased composition (polar residues). The DFDF domain occupies 419-455 (RIPSSSIEYTEEFDFEAMNEKFKKSELWGYLGRNNQR). Residues 474 to 489 (PAYNKDDFFDTISCNQ) carry the FFD box motif. Residues 498–518 (QQHNQFPEHMRQVPEAFGNNF) carry the TFG box motif.

This sequence belongs to the LSM14 family. In terms of assembly, homodimer. Component of the decapping complex.

The protein resides in the cytoplasm. It is found in the P-body. Functionally, as a component of the decapping complex, involved in the degradation of mRNAs. Promotes P-body formation. Translational repressor. The polypeptide is Decapping 5-like protein (DCP5-L) (Arabidopsis thaliana (Mouse-ear cress)).